A 551-amino-acid chain; its full sequence is Translocated intimin receptor Tir (551 aa).

Composition is skewed to low complexity over residues 1-15 (MPIG…SNNL) and 212-229 (DDSV…SSVR). Disordered regions lie at residues 1–36 (MPIG…GAGQ) and 186–229 (DPNN…SSVR). The Cytoplasmic portion of the chain corresponds to 1-233 (MPIGNLGNNV…TASSVRSDPK (233 aa)). The chain crosses the membrane as a helical span at residues 234-254 (FWVSIGAIAAGLAGLAATGIT). Residues 255–362 (QALALTPEPD…RRQEELELSS (108 aa)) are Extracellular-facing. Residues 259–311 (LTPEPDDPTTTDPEQAASAAESATRDQLTQEAFKNPENQKVSIDEIGNSIPSG) are disordered. Residues 283–299 (RDQLTQEAFKNPENQKV) show a composition bias toward polar residues. A helical transmembrane segment spans residues 363 to 383 (GIGYSLSSALIVGGGIGAGVT). Topologically, residues 384-551 (TALHRRNQPA…APTPGPGRFV (168 aa)) are cytoplasmic. Residues 389–450 (RNQPAEQTTT…THWSDTSSAV (62 aa)) form a disordered region. The segment covering 395 to 409 (QTTTTTTHTVVQQQT) has biased composition (low complexity). The segment covering 422 to 435 (IRAEDTSLNRRDSQ) has biased composition (basic and acidic residues). Positions 436 to 450 (RSTASTHWSDTSSAV) are enriched in polar residues. The short motif at 452-454 (NPY) is the Essential for actin pedestal formation element.

It belongs to the Tir receptor family. In terms of assembly, interacts with intimin and host proteins. Post-translationally, phosphorylated by host kinases.

The protein localises to the secreted. Its subcellular location is the host cell membrane. Functionally, multifunctional protein that is required for efficient pedestal formation in host epithelial cells during infection. The extracellular region acts as a receptor for bacterial intimin, allowing the bacterium to attach tightly to the host-cell surface. Simultaneously, the intracellular region initiates a signaling cascade in the host cell, which leads to actin polymerization and formation of actin pedestals at the sites of bacterial adhesion. This is Translocated intimin receptor Tir (tir) from Escherichia coli O111:H- (strain 11128 / EHEC).